The chain runs to 586 residues: YTH domain-containing family protein 2 (586 aa).

Disordered stretches follow at residues 98 to 128, 141 to 181, and 301 to 464; these read LKEK…QPVQ, SQDQ…KESP, and QGLA…PLVS. Polar residues-rich tracts occupy residues 107 to 128, 169 to 181, and 352 to 368; these read ALRQ…QPVQ, TLPT…KESP, and SSQA…TDIQ. Over residues 398–418 the composition is skewed to basic residues; it reads CARRHRSSSPRGRSGSHKSRR. Polar residues predominate over residues 421–436; the sequence is TDSPVSRSTTKSTPSR. One can recognise a YTH domain in the interval 435–576; the sequence is SRARQPGHRD…YCGRDLLRLM (142 aa). Positions 441-458 are enriched in basic and acidic residues; that stretch reads GHRDYREYRDDRNRDTKP.

Belongs to the YTHDF family. YTHDF1 subfamily.

In terms of biological role, specifically recognizes and binds N6-methyladenosine (m6A)-containing mRNAs, and regulates their stability. M6A is a modification present at internal sites of mRNAs and some non-coding RNAs and plays a role in mRNA stability and processing. Plays a role in pathogenicity towards plant host. The polypeptide is YTH domain-containing family protein 2 (Pyricularia oryzae (strain 70-15 / ATCC MYA-4617 / FGSC 8958) (Rice blast fungus)).